A 284-amino-acid polypeptide reads, in one-letter code: Tryptophan synthase alpha chain (284 aa).

Catalysis depends on proton acceptor residues glutamate 55 and aspartate 66.

Belongs to the TrpA family. As to quaternary structure, tetramer of two alpha and two beta chains.

It catalyses the reaction (1S,2R)-1-C-(indol-3-yl)glycerol 3-phosphate + L-serine = D-glyceraldehyde 3-phosphate + L-tryptophan + H2O. It functions in the pathway amino-acid biosynthesis; L-tryptophan biosynthesis; L-tryptophan from chorismate: step 5/5. In terms of biological role, the alpha subunit is responsible for the aldol cleavage of indoleglycerol phosphate to indole and glyceraldehyde 3-phosphate. The sequence is that of Tryptophan synthase alpha chain from Methanococcus voltae.